Consider the following 312-residue polypeptide: UDP-N-acetylenolpyruvoylglucosamine reductase (312 aa).

The FAD-binding PCMH-type domain maps to 30 to 202 (RVGGPAQWLA…VAAQFQLEPG (173 aa)). R181 is a catalytic residue. Catalysis depends on S232, which acts as the Proton donor. Residue E302 is part of the active site.

It belongs to the MurB family. FAD serves as cofactor.

It localises to the cytoplasm. The catalysed reaction is UDP-N-acetyl-alpha-D-muramate + NADP(+) = UDP-N-acetyl-3-O-(1-carboxyvinyl)-alpha-D-glucosamine + NADPH + H(+). It participates in cell wall biogenesis; peptidoglycan biosynthesis. In terms of biological role, cell wall formation. The protein is UDP-N-acetylenolpyruvoylglucosamine reductase of Synechococcus sp. (strain CC9311).